The primary structure comprises 126 residues: Small ribosomal subunit protein uS13 (126 aa).

Positions Arg91–Lys126 are disordered. Positions Arg108–Lys126 are enriched in basic residues.

Belongs to the universal ribosomal protein uS13 family. Part of the 30S ribosomal subunit. Forms a loose heterodimer with protein S19. Forms two bridges to the 50S subunit in the 70S ribosome.

Its function is as follows. Located at the top of the head of the 30S subunit, it contacts several helices of the 16S rRNA. In the 70S ribosome it contacts the 23S rRNA (bridge B1a) and protein L5 of the 50S subunit (bridge B1b), connecting the 2 subunits; these bridges are implicated in subunit movement. Contacts the tRNAs in the A and P-sites. In Streptomyces coelicolor (strain ATCC BAA-471 / A3(2) / M145), this protein is Small ribosomal subunit protein uS13.